The chain runs to 803 residues: Integrin beta-1 (803 aa).

An N-terminal signal peptide occupies residues 1 to 24 (MAETNLTLLTWAGILCCLIWSGSA). Glutamine 25 bears the Blocked amino end (Gln) mark. The Extracellular segment spans residues 25-733 (QQGGSDCIKA…ETPECPSGPD (709 aa)). Residues 30–80 (DCIKANAKSCGECIQAGPNCGWCKKTDFLQEGEPTSARCDDLAALKSKGCP) enclose the PSI domain. Disulfide bonds link cysteine 31–cysteine 49, cysteine 39–cysteine 469, cysteine 42–cysteine 68, cysteine 52–cysteine 79, cysteine 211–cysteine 217, cysteine 265–cysteine 305, cysteine 405–cysteine 419, cysteine 439–cysteine 467, cysteine 471–cysteine 491, cysteine 482–cysteine 494, cysteine 496–cysteine 505, cysteine 507–cysteine 538, cysteine 521–cysteine 536, cysteine 530–cysteine 541, cysteine 543–cysteine 558, cysteine 560–cysteine 581, cysteine 565–cysteine 579, cysteine 573–cysteine 584, cysteine 586–cysteine 595, cysteine 597–cysteine 620, cysteine 604–cysteine 618, and cysteine 612–cysteine 623. The VWFA domain occupies 144–382 (DYPIDLYYLM…QLIIDAYNSL (239 aa)). Residues serine 156 and serine 158 each contribute to the Mg(2+) site. Residues serine 158, aspartate 161, aspartate 162, and glutamate 193 each contribute to the Ca(2+) site. The tract at residues 211-217 (CTGDQNC) is CX3CL1-binding. The N-linked (GlcNAc...) asparagine glycan is linked to asparagine 216. Ca(2+)-binding residues include asparagine 248, aspartate 250, proline 252, and glutamate 253. Glutamate 253 is a binding site for Mg(2+). Asparagine 273 carries N-linked (GlcNAc...) asparagine glycosylation. The interval 299–318 (LPNDGKCHLENNMYTMSHYY) is CX3CL1-binding. 6 N-linked (GlcNAc...) asparagine glycosylation sites follow: asparagine 367, asparagine 410, asparagine 421, asparagine 433, asparagine 445, and asparagine 486. The interaction with TMEM182 stretch occupies residues 387–470 (ILENSKLPKE…IHLQFICDCL (84 aa)). I-EGF domains lie at 471–506 (CQSE…RLCE), 507–559 (CSTD…KYCE), 560–596 (CDNF…SACD), and 597–636 (CSLD…PTCE). Residue asparagine 525 is glycosylated (N-linked (GlcNAc...) asparagine). The N-linked (GlcNAc...) asparagine glycan is linked to asparagine 589. An N-linked (GlcNAc...) asparagine glycan is attached at asparagine 624. Disulfide bonds link cysteine 625–cysteine 635, cysteine 638–cysteine 641, cysteine 645–cysteine 696, cysteine 651–cysteine 670, cysteine 654–cysteine 666, and cysteine 704–cysteine 728. A glycan (N-linked (GlcNAc...) asparagine) is linked at asparagine 674. Residues 734-756 (IIPIVAGVVAGIVLIGLALLLIW) form a helical membrane-spanning segment. Residues 757–803 (KLLMIIHDRREFAKFEKEKMNAKWDTGENPIYKSAVTTVVNPKYEGK) lie on the Cytoplasmic side of the membrane. Tyrosine 788 carries the post-translational modification Phosphotyrosine; by Tyr-kinases.

It belongs to the integrin beta chain family. Heterodimer of an alpha and a beta subunit. Beta-1 associates with either alpha-1, alpha-2, alpha-3, alpha-4, alpha-5, alpha-6, alpha-7, alpha-8, alpha-9, alpha-10, alpha-11 or alpha-V. Interacts with TMEM182 and LAMB1. In terms of tissue distribution, expressed on surface of embryonic fibroblasts (at protein level).

It localises to the cell membrane. Its subcellular location is the cell projection. The protein resides in the invadopodium membrane. The protein localises to the ruffle membrane. It is found in the melanosome. It localises to the lamellipodium. Its subcellular location is the ruffle. The protein resides in the cell junction. The protein localises to the focal adhesion. Functionally, integrins alpha-1/beta-1, alpha-2/beta-1, alpha-10/beta-1 and alpha-11/beta-1 are receptors for collagen. Integrins alpha-1/beta-1 and alpha-2/beta-1 recognize the proline-hydroxylated sequence G-F-P-G-E-R in collagen. Integrins alpha-2/beta-1, alpha-3/beta-1, alpha-4/beta-1, alpha-5/beta-1, alpha-8/beta-1, alpha-10/beta-1, alpha-11/beta-1 and alpha-V/beta-1 are receptors for fibronectin. Alpha-4/beta-1 recognizes one or more domains within the alternatively spliced CS-1 and CS-5 regions of fibronectin. Integrin alpha-5/beta-1 is a receptor for fibrinogen. Integrin alpha-1/beta-1, alpha-2/beta-1, alpha-6/beta-1 and alpha-7/beta-1 are receptors for lamimin. Integrin alpha-6/beta-1 (ITGA6:ITGB1) is present in oocytes and is involved in sperm-egg fusion. Integrin alpha-4/beta-1 is a receptor for VCAM1 and recognizes the sequence Q-I-D-S in VCAM1. Integrin alpha-9/beta-1 is a receptor for VCAM1, cytotactin and osteopontin. It recognizes the sequence A-E-I-D-G-I-E-L in cytotactin. Integrin alpha-3/beta-1 is a receptor for epiligrin, thrombospondin and CSPG4. Integrin alpha-3/beta-1 provides a docking site for FAP (seprase) at invadopodia plasma membranes in a collagen-dependent manner and hence may participate in the adhesion, formation of invadopodia and matrix degradation processes, promoting cell invasion. Alpha-3/beta-1 may mediate with LGALS3 the stimulation by CSPG4 of endothelial cells migration. Integrin alpha-V/beta-1 is a receptor for vitronectin. Beta-1 integrins recognize the sequence R-G-D in a wide array of ligands. When associated with alpha-7/beta-1 integrin, regulates cell adhesion and laminin matrix deposition. Involved in promoting endothelial cell motility and angiogenesis. Involved in osteoblast compaction through the fibronectin fibrillogenesis cell-mediated matrix assembly process and the formation of mineralized bone nodules. May be involved in up-regulation of the activity of kinases such as PKC via binding to KRT1. Together with KRT1 and RACK1, serves as a platform for SRC activation or inactivation. ITGA4:ITGB1 binds to fractalkine (CX3CL1) and may act as its coreceptor in CX3CR1-dependent fractalkine signaling. ITGA4:ITGB1 and ITGA5:ITGB1 bind to PLA2G2A via a site (site 2) which is distinct from the classical ligand-binding site (site 1) and this induces integrin conformational changes and enhanced ligand binding to site 1. ITGA5:ITGB1 acts as a receptor for fibrillin-1 (FBN1) and mediates R-G-D-dependent cell adhesion to FBN1. ITGA5:ITGB1 acts as a receptor for fibronectin FN1 and mediates R-G-D-dependent cell adhesion to FN1. ITGA5:ITGB1 is a receptor for IL1B and binding is essential for IL1B signaling. ITGA5:ITGB3 is a receptor for soluble CD40LG and is required for CD40/CD40LG signaling. Plays an important role in myoblast differentiation and fusion during skeletal myogenesis. This chain is Integrin beta-1 (ITGB1), found in Gallus gallus (Chicken).